The following is a 358-amino-acid chain: Chorismate synthase (358 aa).

Arginine 46 contributes to the NADP(+) binding site. FMN-binding positions include 123–125, 235–236, glycine 275, 290–294, and arginine 316; these read RSS, NA, and KPTPS.

The protein belongs to the chorismate synthase family. In terms of assembly, homotetramer. FMNH2 is required as a cofactor.

The enzyme catalyses 5-O-(1-carboxyvinyl)-3-phosphoshikimate = chorismate + phosphate. The protein operates within metabolic intermediate biosynthesis; chorismate biosynthesis; chorismate from D-erythrose 4-phosphate and phosphoenolpyruvate: step 7/7. Functionally, catalyzes the anti-1,4-elimination of the C-3 phosphate and the C-6 proR hydrogen from 5-enolpyruvylshikimate-3-phosphate (EPSP) to yield chorismate, which is the branch point compound that serves as the starting substrate for the three terminal pathways of aromatic amino acid biosynthesis. This reaction introduces a second double bond into the aromatic ring system. This Helicobacter hepaticus (strain ATCC 51449 / 3B1) protein is Chorismate synthase.